Reading from the N-terminus, the 311-residue chain is ATP synthase subunit gamma, mitochondrial (311 aa).

A mitochondrion-targeting transit peptide spans 1–33 (MLSRIVSNNATRSVMCHQAQVGILYKTNPVRTY).

It belongs to the ATPase gamma chain family. F-type ATPases have 2 components, CF(1) - the catalytic core - and CF(0) - the membrane proton channel. CF(1) has five subunits: alpha(3), beta(3), gamma(1), delta(1), epsilon(1). CF(0) has three main subunits: a, b and c.

It localises to the mitochondrion. Its subcellular location is the mitochondrion inner membrane. Mitochondrial membrane ATP synthase (F(1)F(0) ATP synthase or Complex V) produces ATP from ADP in the presence of a proton gradient across the membrane which is generated by electron transport complexes of the respiratory chain. F-type ATPases consist of two structural domains, F(1) - containing the extramembraneous catalytic core, and F(0) - containing the membrane proton channel, linked together by a central stalk and a peripheral stalk. During catalysis, ATP synthesis in the catalytic domain of F(1) is coupled via a rotary mechanism of the central stalk subunits to proton translocation. Part of the complex F(1) domain and the central stalk which is part of the complex rotary element. The gamma subunit protrudes into the catalytic domain formed of alpha(3)beta(3). Rotation of the central stalk against the surrounding alpha(3)beta(3) subunits leads to hydrolysis of ATP in three separate catalytic sites on the beta subunits. The chain is ATP synthase subunit gamma, mitochondrial (ATP3) from Saccharomyces cerevisiae (strain ATCC 204508 / S288c) (Baker's yeast).